Reading from the N-terminus, the 524-residue chain is Strychnine-10-hydroxylase (524 aa).

Residues 6–26 (LYIHTAILGLISLFLILHFVF) traverse the membrane as a helical segment. Cys466 contributes to the heme binding site.

Belongs to the cytochrome P450 family. It depends on heme as a cofactor.

The protein localises to the membrane. The enzyme catalyses strychnine + reduced [NADPH--hemoprotein reductase] + O2 = 10-hydroxystrychnine + oxidized [NADPH--hemoprotein reductase] + H2O + H(+). The protein operates within alkaloid biosynthesis. In terms of biological role, monooxygenase involved in the biosynthesis of curare monoterpene indole alkaloids (MIAs), natural products such as strychnine, a neurotoxic compound used as a pesticide to control rodents, and its pharmacologically active derivatives, including brucine, used to regulate blood pressure. Curare alkaloids act as animal glycine receptor antagonists. Catalyzes the conversion of strychnine to 10-OH strychnine. The chain is Strychnine-10-hydroxylase from Strychnos nux-vomica (Poison nut).